A 1032-amino-acid polypeptide reads, in one-letter code: Integrin alpha-4 (1032 aa).

The first 33 residues, 1-33, serve as a signal peptide directing secretion; the sequence is MAWEARREPGPRRAAVRETVMLLLCLGVPTGRP. FG-GAP repeat units follow at residues 35 to 100, 110 to 177, 185 to 237, 238 to 291, 292 to 351, 355 to 412, and 416 to 478; these read NVDT…PGQT, NGEP…TELS, QDYV…KYKA, FLDK…EKEL, NILH…GAVM, ETNL…GISS, and QRIE…HPES. Topologically, residues 35-977 are extracellular; that stretch reads NVDTESALLY…HHQRPKRYFT (943 aa). N79 carries an N-linked (GlcNAc...) asparagine glycan. The cysteines at positions 91 and 101 are disulfide-linked. The N-linked (GlcNAc...) asparagine glycan is linked to N138. 2 disulfide bridges follow: C144/C165 and C183/C198. N-linked (GlcNAc...) asparagine glycosylation occurs at N229. The Ca(2+) site is built by D314, N316, D318, D322, D377, D379, D381, D385, D439, D441, N443, Y445, and D447. Residue N480 is glycosylated (N-linked (GlcNAc...) asparagine). 2 cysteine pairs are disulfide-bonded: C486-C495 and C501-C557. Residues N518 and N538 are each glycosylated (N-linked (GlcNAc...) asparagine). The short motif at 606–616 is the SG1 element; the sequence is KKEKDIMKKTI. A disulfide bridge links C622 with C627. N-linked (GlcNAc...) asparagine glycans are attached at residues N626, N645, and N660. C698 and C711 are oxidised to a cystine. 2 N-linked (GlcNAc...) asparagine glycosylation sites follow: N806 and N821. 2 disulfide bridges follow: C852/C890 and C897/C902. A helical membrane pass occupies residues 978–1001; it reads IVIISSSLLLGLIVLLLISYVMWK. The Cytoplasmic segment spans residues 1002 to 1032; the sequence is AGFFKRQYKSILQEENRRDSWSYINSKSNDD. The GFFKR motif motif lies at 1003–1007; sequence GFFKR. S1021 carries the phosphoserine modification.

The protein belongs to the integrin alpha chain family. As to quaternary structure, heterodimer of an alpha and a beta subunit. The alpha subunit can sometimes be cleaved into two non-covalently associated fragments. Alpha-4 associates with either beta-1 or beta-7. Alpha-4 interacts with PXN, LPXN, and TGFB1I1/HIC5. Interacts with CSPG4 through CSPG4 chondroitin sulfate glycosaminoglycan. Interacts with JAML; integrin alpha-4/beta-1 may regulate leukocyte to endothelial cells adhesion by controlling JAML homodimerization. ITGA4:ITGB1 is found in a ternary complex with CX3CR1 and CX3CL1. Interacts with MDK. ITGA4:ITGB1 interacts with MDK; this interaction mediates MDK-induced osteoblast cells migration through PXN phosphorylation. Integrin ITGA4:ITGB1 interacts with SVEP1 (via Sushi domain 21); thereby inhibits Ca(2+) intracellular signaling and as a result represses vasocontraction. ITGA4:ITGB1 interacts with SELP. ITGA4:ITGB1 interacts with BCAM. Phosphorylation on Ser-1027 inhibits PXN binding. In terms of tissue distribution, expressed in vascular smooth muscle cells (at protein level).

The protein resides in the membrane. In terms of biological role, integrins alpha-4/beta-1 (VLA-4) and alpha-4/beta-7 are receptors for fibronectin. They recognize one or more domains within the alternatively spliced CS-1 and CS-5 regions of fibronectin. They are also receptors for VCAM1. Integrin alpha-4/beta-1 recognizes the sequence Q-I-D-S in VCAM1. Integrin alpha-4/beta-7 is also a receptor for MADCAM1. It recognizes the sequence L-D-T in MADCAM1. On activated endothelial cells integrin VLA-4 triggers homotypic aggregation for most VLA-4-positive leukocyte cell lines. It may also participate in cytolytic T-cell interactions with target cells. ITGA4:ITGB1 binds to fractalkine (CX3CL1) and may act as its coreceptor in CX3CR1-dependent fractalkine signaling. ITGA4:ITGB1 binds to PLA2G2A via a site (site 2) which is distinct from the classical ligand-binding site (site 1) and this induces integrin conformational changes and enhanced ligand binding to site 1. Integrin ITGA4:ITGB1 represses PRKCA-mediated L-type voltage-gated channel Ca(2+) influx and ROCK-mediated calcium sensitivity in vascular smooth muscle cells via its interaction with SVEP1, thereby inhibiting vasocontraction. The protein is Integrin alpha-4 (ITGA4) of Homo sapiens (Human).